A 237-amino-acid chain; its full sequence is Pyrimidine 5'-nucleotidase PynA (237 aa).

The active-site Nucleophile is aspartate 9. Positions 9, 11, and 181 each coordinate Mg(2+). Aspartate 11 (proton donor) is an active-site residue.

This sequence belongs to the HAD-like hydrolase superfamily. YjjG family. As to quaternary structure, homodimer. Mg(2+) is required as a cofactor. It depends on Mn(2+) as a cofactor.

It is found in the cytoplasm. It catalyses the reaction a ribonucleoside 5'-phosphate + H2O = a ribonucleoside + phosphate. Nucleotidase that shows high phosphatase activity toward non-canonical pyrimidine nucleotides and three canonical nucleoside 5'-monophosphates (UMP, dUMP and dTMP), and no activity against IMP, UDP, GMP, AMP, UTP or pNPP. Appears to function as a house-cleaning nucleotidase in vivo, since the general nucleotidase activity of it allows it to protect cells against non-canonical pyrimidine derivatives such as 5-fluoro-2'-deoxyuridine monophosphate (5-FdUMP), and prevents the incorporation of potentially mutagenic nucleotides such as 5-bromo-2'-deoxyuridine (5-BrdU) into DNA. Is strictly specific to pyrimidine substrates with 5'-monophosphates and shows no activity against nucleoside di- and triphosphates. This Streptococcus pneumoniae (strain ATCC BAA-255 / R6) protein is Pyrimidine 5'-nucleotidase PynA.